A 530-amino-acid chain; its full sequence is UDP-glucuronosyltransferase 2B15 (530 aa).

Positions 1-23 are cleaved as a signal peptide; the sequence is MSLKWTSVFLLIQLSCYFSSGSC. Asn-65 carries an N-linked (GlcNAc...) asparagine glycan. Residue Lys-136 is modified to N6-succinyllysine. N-linked (GlcNAc...) asparagine glycosylation is found at Asn-316 and Asn-483. The chain crosses the membrane as a helical span at residues 495 to 515; that stretch reads IAFLLACVATVIFIITKFCLF.

It belongs to the UDP-glycosyltransferase family. In terms of tissue distribution, expressed in many tissues. Present in liver, prostate and testis.

It localises to the endoplasmic reticulum membrane. It catalyses the reaction glucuronate acceptor + UDP-alpha-D-glucuronate = acceptor beta-D-glucuronoside + UDP + H(+). It carries out the reaction 17alpha-estradiol + UDP-alpha-D-glucuronate = 17alpha-estradiol 3-O-(beta-D-glucuronate) + UDP + H(+). The enzyme catalyses 16alpha,17alpha-estriol + UDP-alpha-D-glucuronate = 16alpha,17alpha-estriol 3-O-(beta-D-glucuronate) + UDP + H(+). The catalysed reaction is 17beta-hydroxy-5alpha-androstan-3-one + UDP-alpha-D-glucuronate = 5alpha-dihydrotestosterone 17-O-(beta-D-glucuronate) + UDP + H(+). Its function is as follows. UDP-glucuronosyltransferase (UGT) that catalyzes phase II biotransformation reactions in which lipophilic substrates are conjugated with glucuronic acid to increase the metabolite's water solubility, thereby facilitating excretion into either the urine or bile. Essential for the elimination and detoxification of drugs, xenobiotics and endogenous compounds. Catalyzes the glucuronidation of endogenous steroid hormones such as androgens (testosterone, androsterone) and estrogens (estradiol, epiestradiol, estriol, catechol estrogens). Displays glucuronidation activity toward several classes of xenobiotic substrates, including phenolic compounds (eugenol, 4-nitrophenol, 4-hydroxybiphenyl) and phenylpropanoids (naringenin, coumarins). Catalyzes the glucuronidation of monoterpenoid alcohols such as borneol, menthol and isomenthol, a class of natural compounds used in essential oils. This is UDP-glucuronosyltransferase 2B15 from Homo sapiens (Human).